We begin with the raw amino-acid sequence, 79 residues long: Small ribosomal subunit protein bS18 (79 aa).

This sequence belongs to the bacterial ribosomal protein bS18 family. As to quaternary structure, part of the 30S ribosomal subunit. Forms a tight heterodimer with protein bS6.

Functionally, binds as a heterodimer with protein bS6 to the central domain of the 16S rRNA, where it helps stabilize the platform of the 30S subunit. This chain is Small ribosomal subunit protein bS18, found in Ureaplasma urealyticum serovar 10 (strain ATCC 33699 / Western).